The primary structure comprises 905 residues: Sun domain-containing protein 1 (905 aa).

Disordered regions lie at residues 1–21 (MSGD…LPLQ), 41–166 (NNTV…ILKQ), and 207–242 (QQQQ…IDNN). Residues 1–290 (MSGDYKPNYQ…NNNNKVNFKQ (290 aa)) are Nuclear-facing. Composition is skewed to low complexity over residues 41–67 (NNTV…SSYL) and 75–101 (SNQI…ASSS). Basic and acidic residues predominate over residues 107–116 (KVDHNSHNNN). The segment covering 117-126 (DDDDIEDDVD) has biased composition (acidic residues). The segment covering 129 to 146 (YSTNNASSNILHNRFSNS) has biased composition (polar residues). Residues 170 to 221 (LYNHLNNQIQQQQQQQQQQQQQQQQQQQQQQQQQQQQQQQQQQQRNNNNNSN) adopt a coiled-coil conformation. Low complexity predominate over residues 207–227 (QQQQQQQRNNNNNSNSSNNNN). A helical transmembrane segment spans residues 291-311 (AIWIFIFSVLFIGCLLGLFST). At 312 to 905 (NFYGIHIYFP…IEKQQQSDEL (594 aa)) the chain is on the perinuclear space side. Coiled-coil stretches lie at residues 359-456 (KKNE…QLIQ) and 504-609 (REFN…TQQF). Positions 662–860 (GASIEYNALH…YRFRVHGYQI (199 aa)) constitute an SUN domain. A coiled-coil region spans residues 864 to 901 (EQEQIQIIQEEQSFKQEEINQQQIEQIEQIEQIEKQQQ).

In terms of assembly, homodimer and homooligomer.

It is found in the nucleus membrane. In terms of biological role, may have an important role in defining the spacing of the nuclear envelope lumen. Essential for centrosome attachment to the nucleus, maintenance of correct ploidy, proper mitosis, association of the centromere cluster with the centrosome and the maintenance of genome stability. Requires direct chromatin binding for inner nuclear membrane targeting. The sequence is that of Sun domain-containing protein 1 (sun1) from Dictyostelium discoideum (Social amoeba).